Reading from the N-terminus, the 370-residue chain is Putative F-box protein At1g47390 (370 aa).

An F-box domain is found at 1–47 (MAPEEKLPCELIEEILSRVPPESLVRFRTVSKKWNALFDDKMFINNH).

The polypeptide is Putative F-box protein At1g47390 (Arabidopsis thaliana (Mouse-ear cress)).